Here is a 72-residue protein sequence, read N- to C-terminus: Translation initiation factor IF-1 (72 aa).

In terms of domain architecture, S1-like spans 1 to 72 (MAKEDTLEFP…TKGRINYRFK (72 aa)).

The protein belongs to the IF-1 family. As to quaternary structure, component of the 30S ribosomal translation pre-initiation complex which assembles on the 30S ribosome in the order IF-2 and IF-3, IF-1 and N-formylmethionyl-tRNA(fMet); mRNA recruitment can occur at any time during PIC assembly.

It localises to the cytoplasm. Functionally, one of the essential components for the initiation of protein synthesis. Stabilizes the binding of IF-2 and IF-3 on the 30S subunit to which N-formylmethionyl-tRNA(fMet) subsequently binds. Helps modulate mRNA selection, yielding the 30S pre-initiation complex (PIC). Upon addition of the 50S ribosomal subunit IF-1, IF-2 and IF-3 are released leaving the mature 70S translation initiation complex. The polypeptide is Translation initiation factor IF-1 (Roseobacter denitrificans (strain ATCC 33942 / OCh 114) (Erythrobacter sp. (strain OCh 114))).